The primary structure comprises 331 residues: Phosphoenolpyruvate transferase (331 aa).

Asp63 lines the 7,8-didemethyl-8-hydroxy-5-deazariboflavin pocket.

Belongs to the CofD family. In terms of assembly, homodimer. The cofactor is Mg(2+).

The enzyme catalyses enolpyruvoyl-2-diphospho-5'-guanosine + 7,8-didemethyl-8-hydroxy-5-deazariboflavin = dehydro coenzyme F420-0 + GMP + H(+). Its pathway is cofactor biosynthesis; coenzyme F420 biosynthesis. In terms of biological role, catalyzes the transfer of the phosphoenolpyruvate moiety from enoylpyruvoyl-2-diphospho-5'-guanosine (EPPG) to 7,8-didemethyl-8-hydroxy-5-deazariboflavin (FO) with the formation of dehydro coenzyme F420-0 and GMP. The sequence is that of Phosphoenolpyruvate transferase from Mycobacterium bovis (strain ATCC BAA-935 / AF2122/97).